The sequence spans 235 residues: Ribonuclease 3 (235 aa).

The region spanning 8 to 137 is the RNase III domain; the sequence is PAELARRIGI…VIGAIFLSGG (130 aa). Glu-50 serves as a coordination point for Mg(2+). The active site involves Asp-54. Positions 123 and 126 each coordinate Mg(2+). Glu-126 is an active-site residue. The region spanning 163-232 is the DRBM domain; the sequence is DNKTAFQEWV…AGRAMREWAG (70 aa). Residues 211 to 235 are disordered; the sequence is QGRTKKEAEQQAAGRAMREWAGRKG. The span at 226-235 shows a compositional bias: basic and acidic residues; it reads AMREWAGRKG.

The protein belongs to the ribonuclease III family. Homodimer. The cofactor is Mg(2+).

Its subcellular location is the cytoplasm. It catalyses the reaction Endonucleolytic cleavage to 5'-phosphomonoester.. In terms of biological role, digests double-stranded RNA. Involved in the processing of primary rRNA transcript to yield the immediate precursors to the large and small rRNAs (23S and 16S). Processes some mRNAs, and tRNAs when they are encoded in the rRNA operon. Processes pre-crRNA and tracrRNA of type II CRISPR loci if present in the organism. The polypeptide is Ribonuclease 3 (Heliobacterium modesticaldum (strain ATCC 51547 / Ice1)).